Reading from the N-terminus, the 229-residue chain is Sperm flagellar protein 1 (229 aa).

Positions 7–115 (EETMQELYTW…TLRQKIEEKQ (109 aa)) constitute a Calponin-homology (CH) domain. Residues 122-169 (ADLSQDQATQNNGNTHSDKGYKSNGTELSPRQGARVDPASKTHQGYAQ) form a disordered region. Positions 123–136 (DLSQDQATQNNGNT) are enriched in polar residues. The segment at 178-229 (RFQLAEKEQTLILSQETIQILQAKLRRLEQLLLLKNVRIDDLTRRLQELEKK) is essential for homodimerization and microtubule bundling activity.

As to quaternary structure, homodimer.

The protein resides in the cytoplasm. Its subcellular location is the cytoskeleton. The protein localises to the cilium axoneme. It localises to the apical cell membrane. Its function is as follows. Microtubule-associated protein involved in the stabilization of microtubules along the axis of migration during radial intercalation. Promotes the establishment and stabilization of an axis of microtubules required for the active migration of cells into the outer epithelium. Microtubule-associated protein that promotes microtubule bundling and stabilizes microtubules against depolymerization in response to cold shock. Essential for ciliary central apparatus formation which requires both its microtubule-binding and bundling activities. Regulates planar cell polarity signaling pathway and asymmetric microtubule accumulation in ciliated epithelia. The sequence is that of Sperm flagellar protein 1 from Xenopus laevis (African clawed frog).